We begin with the raw amino-acid sequence, 137 residues long: MIIGIGSDLIDIRRIENSLERHGQRFVQRIYTEVEQARSENRRARAASYAKRFAAKEACAKALGTGLAQGVFWRDMGVVNLPSGAPTMALTGGALARLEKILPPGHKAAIHLTITDDFPLAQAFVIIEALPVEQAPH.

Mg(2+)-binding residues include Asp-8 and Glu-57.

Belongs to the P-Pant transferase superfamily. AcpS family. Mg(2+) is required as a cofactor.

It localises to the cytoplasm. The enzyme catalyses apo-[ACP] + CoA = holo-[ACP] + adenosine 3',5'-bisphosphate + H(+). In terms of biological role, transfers the 4'-phosphopantetheine moiety from coenzyme A to a Ser of acyl-carrier-protein. The sequence is that of Holo-[acyl-carrier-protein] synthase from Mesorhizobium japonicum (strain LMG 29417 / CECT 9101 / MAFF 303099) (Mesorhizobium loti (strain MAFF 303099)).